Here is an 882-residue protein sequence, read N- to C-terminus: MVPFKLTNKVPTDTGPSLISAQSVPRPIVFMDNRNNTRIVTPTLPPNQHRGISGASTALPWSPESKNTGKYIWNRVKLKNSPFPRYRHSSSFIVTNDNRIFVTGGLHDQSVYGDVWQIAANADGTSFTSKRIDIDQNTPPPRVGHASTICGNAYVVFGGDTHKLNKNGLLDDDLYLFNINSYKWTIPQPIGRRPLGRYGHKISIIASNPMQTKLYLFGGQVDETYFNDLVVFDLSSFRRPNSHWEFLEPVGDLPPPLTNHTMVAYDNKLWVFGGETPKTISNDTYRYDPAQSEWSKVKTTGEKPPPIQEHASVVYKHLMCVLGGKDTHNAYSNDVYFLNLLSLKWYKLPRMKEGIPQERSGHSLTLMKNEKLLIMGGDKTDYASPNIHDLQTSETDQGEGTLLYTLDLSSLNELCPGIMCESLHAGESFSNSLSGGFTPSKSTESENQEIINILTPRLPDSKVLSYNDIDEGAGSYSSALDDKAFERKSDREEKKPQSSKVDSSINKESPGTGIKVSKKNFPVLRGLTVDSEEYGSSSYKDTSCQKGIPKNLFDDLNLNLQTLRLEAQQKELETARHISQLEKEVQRLMVIKEASKDSNFQTARLKNLEIQKTFLESRINDLKNLLMVKLSQASKLCDQITIQNNGLKTCSEHVTIKRDIIDLENKCDVLKRQNEILVNNMQKITPELHTYLNESSCYLGKLLKSYPTSARPPSSEKDNQIYEKDSLNKIEKVINEMHETVRAKEKLHLETQKLNDERDSLRANLLDNNNKLDALRKLSDGSSKSMDLTKKAIHLSQSELEKYRKNNDDLQKEIDRIKTEQAEQDDKQEQRGAITHGNFDAFHRMKINNLKAELYMSKENRDSLKDELLALKKKLYTLEQKK.

Residues 41 to 60 (TPTLPPNQHRGISGASTALP) form a disordered region. Kelch repeat units lie at residues 99–143 (RIFV…PPRV), 153–207 (AYVV…IIAS), 213–267 (KLYL…AYDN), 268–317 (KLWV…VYKH), 319–369 (MCVL…LMKN), and 371–417 (KLLI…LCPG). Thr455 bears the Phosphothreonine mark. Over residues 480-496 (LDDKAFERKSDREEKKP) the composition is skewed to basic and acidic residues. Positions 480 to 516 (LDDKAFERKSDREEKKPQSSKVDSSINKESPGTGIKV) are disordered. Residues 498 to 509 (SSKVDSSINKES) show a composition bias toward polar residues. Ser509 is subject to Phosphoserine. 2 coiled-coil regions span residues 550-685 (KNLF…QKIT) and 728-881 (NKIE…LEQK).

Interacts with KEL1.

This is Kelch repeat-containing protein 2 (KEL2) from Saccharomyces cerevisiae (strain ATCC 204508 / S288c) (Baker's yeast).